Here is a 336-residue protein sequence, read N- to C-terminus: MSEIRTLGEFIVAKQHDFPHASGELSSLIGSIKLAAKIVNREINKAGLVDITGASGEENIQGEQQQKLDVYANDKFKAALEARDQVCGVASEEEDEAVAFNKELNQNAKYVVLMDPLDGSSNIDVNVSVGTIFSIYRRISPIGTPATEEDFLQPGHKQVAAGYIIYGSSTMLVYTTGNGVHGFTYDPSLGVFCLSHENMQVPKDGNIYSINEGNYIRFPEGIKQYLKFCQESKPEDNRPYTSRYIGSLVADFHRNLLKGGIYLYPSTQAYPNGKLRLLYECNPMAMLIEEAGGKATDGEQRILDIKPSELHQRVPFFVGSTNMVDKVHAFLDEWRD.

Mg(2+) contacts are provided by glutamate 92, aspartate 115, leucine 117, and aspartate 118. Substrate contacts are provided by residues aspartate 118–serine 121, asparagine 211, tyrosine 244, tyrosine 262–tyrosine 264, and lysine 274. Glutamate 280 provides a ligand contact to Mg(2+).

The protein belongs to the FBPase class 1 family. In terms of assembly, homotetramer. Requires Mg(2+) as cofactor.

The protein resides in the cytoplasm. The catalysed reaction is beta-D-fructose 1,6-bisphosphate + H2O = beta-D-fructose 6-phosphate + phosphate. The protein operates within carbohydrate biosynthesis; gluconeogenesis. The protein is Fructose-1,6-bisphosphatase class 1 of Aliivibrio fischeri (strain MJ11) (Vibrio fischeri).